The following is a 243-amino-acid chain: Pyridoxine 5'-phosphate synthase (243 aa).

Asparagine 9 contributes to the 3-amino-2-oxopropyl phosphate binding site. 11 to 12 lines the 1-deoxy-D-xylulose 5-phosphate pocket; sequence DH. Residue arginine 20 participates in 3-amino-2-oxopropyl phosphate binding. The active-site Proton acceptor is histidine 45. Residues arginine 47 and histidine 52 each contribute to the 1-deoxy-D-xylulose 5-phosphate site. Residue glutamate 72 is the Proton acceptor of the active site. Threonine 102 is a 1-deoxy-D-xylulose 5-phosphate binding site. The Proton donor role is filled by histidine 193. 3-amino-2-oxopropyl phosphate-binding positions include glycine 194 and 215 to 216; that span reads GH.

This sequence belongs to the PNP synthase family. Homooctamer; tetramer of dimers.

The protein localises to the cytoplasm. It carries out the reaction 3-amino-2-oxopropyl phosphate + 1-deoxy-D-xylulose 5-phosphate = pyridoxine 5'-phosphate + phosphate + 2 H2O + H(+). The protein operates within cofactor biosynthesis; pyridoxine 5'-phosphate biosynthesis; pyridoxine 5'-phosphate from D-erythrose 4-phosphate: step 5/5. Catalyzes the complicated ring closure reaction between the two acyclic compounds 1-deoxy-D-xylulose-5-phosphate (DXP) and 3-amino-2-oxopropyl phosphate (1-amino-acetone-3-phosphate or AAP) to form pyridoxine 5'-phosphate (PNP) and inorganic phosphate. In Salmonella typhimurium (strain LT2 / SGSC1412 / ATCC 700720), this protein is Pyridoxine 5'-phosphate synthase.